A 323-amino-acid chain; its full sequence is Acetyl-coenzyme A carboxylase carboxyl transferase subunit alpha (323 aa).

Residues 39-293 (RLSKKSQQLT…RRALADSLRQ (255 aa)) form the CoA carboxyltransferase C-terminal domain.

The protein belongs to the AccA family. In terms of assembly, acetyl-CoA carboxylase is a heterohexamer composed of biotin carboxyl carrier protein (AccB), biotin carboxylase (AccC) and two subunits each of ACCase subunit alpha (AccA) and ACCase subunit beta (AccD).

The protein localises to the cytoplasm. The catalysed reaction is N(6)-carboxybiotinyl-L-lysyl-[protein] + acetyl-CoA = N(6)-biotinyl-L-lysyl-[protein] + malonyl-CoA. It participates in lipid metabolism; malonyl-CoA biosynthesis; malonyl-CoA from acetyl-CoA: step 1/1. In terms of biological role, component of the acetyl coenzyme A carboxylase (ACC) complex. First, biotin carboxylase catalyzes the carboxylation of biotin on its carrier protein (BCCP) and then the CO(2) group is transferred by the carboxyltransferase to acetyl-CoA to form malonyl-CoA. This Burkholderia multivorans (strain ATCC 17616 / 249) protein is Acetyl-coenzyme A carboxylase carboxyl transferase subunit alpha.